Consider the following 100-residue polypeptide: Eukaryotic translation initiation factor 4E-binding protein 3 (100 aa).

The short motif at 40–46 (YDRKFLL) is the YXXXXLphi motif element. The tract at residues 81-100 (LKEQETEEEIPDDAQFEMDI) is disordered. Positions 85–100 (ETEEEIPDDAQFEMDI) are enriched in acidic residues. The short motif at 96 to 100 (FEMDI) is the TOS motif element.

Belongs to the eIF4E-binding protein family. As to quaternary structure, interacts with EIF4E. Interacts with RPA2 (in unphosphorylated form via N-terminus); the interaction enhances EIF4EBP3-mediated inhibition of EIF4E-mediated mRNA nuclear export. In terms of processing, phosphorylated. In terms of tissue distribution, expression is highest in skeletal muscle, heart, kidney, and pancreas, whereas there is very little expression in brain and thymus.

The protein resides in the cytoplasm. It localises to the nucleus. Its function is as follows. Repressor of translation initiation that regulates EIF4E activity by preventing its assembly into the eIF4F complex: the hypophosphorylated form competes with EIF4G1/EIF4G3 and strongly binds to EIF4E, leading to repression of translation. In contrast, the hyperphosphorylated form dissociates from EIF4E, allowing interaction between EIF4G1/EIF4G3 and EIF4E, leading to initiation of translation. Inhibits EIF4E-mediated mRNA nuclear export. This chain is Eukaryotic translation initiation factor 4E-binding protein 3 (EIF4EBP3), found in Homo sapiens (Human).